Consider the following 302-residue polypeptide: UDP-N-acetylenolpyruvoylglucosamine reductase (302 aa).

The region spanning 31-210 (IGGQTKVYFR…ENEVLELKKK (180 aa)) is the FAD-binding PCMH-type domain. Arginine 175 is an active-site residue. Serine 224 acts as the Proton donor in catalysis. The active site involves glutamate 297.

This sequence belongs to the MurB family. Requires FAD as cofactor.

The protein resides in the cytoplasm. The enzyme catalyses UDP-N-acetyl-alpha-D-muramate + NADP(+) = UDP-N-acetyl-3-O-(1-carboxyvinyl)-alpha-D-glucosamine + NADPH + H(+). The protein operates within cell wall biogenesis; peptidoglycan biosynthesis. In terms of biological role, cell wall formation. This chain is UDP-N-acetylenolpyruvoylglucosamine reductase, found in Pelagibacter ubique (strain HTCC1062).